A 413-amino-acid chain; its full sequence is Imidazolonepropionase (413 aa).

Positions 79 and 81 each coordinate Fe(3+). Zn(2+)-binding residues include histidine 79 and histidine 81. Residues arginine 88, tyrosine 151, and histidine 184 each coordinate 4-imidazolone-5-propanoate. Tyrosine 151 lines the N-formimidoyl-L-glutamate pocket. Histidine 248 is a binding site for Fe(3+). Zn(2+) is bound at residue histidine 248. Glutamate 251 is a 4-imidazolone-5-propanoate binding site. Aspartate 322 contacts Fe(3+). Aspartate 322 contacts Zn(2+). Residues asparagine 324 and glycine 326 each coordinate N-formimidoyl-L-glutamate. Serine 327 is a binding site for 4-imidazolone-5-propanoate.

Belongs to the metallo-dependent hydrolases superfamily. HutI family. Zn(2+) is required as a cofactor. It depends on Fe(3+) as a cofactor.

Its subcellular location is the cytoplasm. The catalysed reaction is 4-imidazolone-5-propanoate + H2O = N-formimidoyl-L-glutamate. The protein operates within amino-acid degradation; L-histidine degradation into L-glutamate; N-formimidoyl-L-glutamate from L-histidine: step 3/3. In terms of biological role, catalyzes the hydrolytic cleavage of the carbon-nitrogen bond in imidazolone-5-propanoate to yield N-formimidoyl-L-glutamate. It is the third step in the universal histidine degradation pathway. The sequence is that of Imidazolonepropionase from Fusobacterium nucleatum subsp. nucleatum (strain ATCC 25586 / DSM 15643 / BCRC 10681 / CIP 101130 / JCM 8532 / KCTC 2640 / LMG 13131 / VPI 4355).